A 384-amino-acid chain; its full sequence is S-adenosylmethionine synthase (384 aa).

Residue His-15 coordinates ATP. A Mg(2+)-binding site is contributed by Asp-17. K(+) is bound at residue Glu-43. 2 residues coordinate L-methionine: Glu-56 and Gln-99. Residues 99-109 (QSPDINQGVDK) are flexible loop. ATP-binding positions include 164 to 166 (DAK), 230 to 231 (RF), Asp-239, 245 to 246 (RK), Ala-262, and Lys-266. An L-methionine-binding site is contributed by Asp-239. Lys-270 is a binding site for L-methionine.

The protein belongs to the AdoMet synthase family. As to quaternary structure, homotetramer; dimer of dimers. Mg(2+) is required as a cofactor. Requires K(+) as cofactor.

The protein resides in the cytoplasm. It carries out the reaction L-methionine + ATP + H2O = S-adenosyl-L-methionine + phosphate + diphosphate. Its pathway is amino-acid biosynthesis; S-adenosyl-L-methionine biosynthesis; S-adenosyl-L-methionine from L-methionine: step 1/1. Functionally, catalyzes the formation of S-adenosylmethionine (AdoMet) from methionine and ATP. The overall synthetic reaction is composed of two sequential steps, AdoMet formation and the subsequent tripolyphosphate hydrolysis which occurs prior to release of AdoMet from the enzyme. In Vibrio parahaemolyticus serotype O3:K6 (strain RIMD 2210633), this protein is S-adenosylmethionine synthase.